A 1210-amino-acid chain; its full sequence is ATP-dependent helicase/nuclease subunit A (1210 aa).

Residues 27–483 (QKRTAQQIEA…ILLKENFRSQ (457 aa)) enclose the UvrD-like helicase ATP-binding domain. ATP is bound at residue 48-55 (ASAGSGKT). Positions 512-798 (QLIAGSHAQT…NLMTIHKSKG (287 aa)) constitute a UvrD-like helicase C-terminal domain.

It belongs to the helicase family. AddA subfamily. Heterodimer of AddA and AddB/RexB. Mg(2+) is required as a cofactor.

It catalyses the reaction Couples ATP hydrolysis with the unwinding of duplex DNA by translocating in the 3'-5' direction.. The enzyme catalyses ATP + H2O = ADP + phosphate + H(+). The heterodimer acts as both an ATP-dependent DNA helicase and an ATP-dependent, dual-direction single-stranded exonuclease. Recognizes the chi site generating a DNA molecule suitable for the initiation of homologous recombination. The AddA nuclease domain is required for chi fragment generation; this subunit has the helicase and 3' -&gt; 5' nuclease activities. The protein is ATP-dependent helicase/nuclease subunit A of Streptococcus pyogenes serotype M5 (strain Manfredo).